Here is a 528-residue protein sequence, read N- to C-terminus: Inorganic phosphate transporter 1-2 (528 aa).

Residues 1 to 24 are Cytoplasmic-facing; the sequence is MAGSQLNVLVKLDQAKTQWYHFMA. Residues 25–45 form a helical membrane-spanning segment; the sequence is IVIAGMGFFTDAYDLFCIALV. Topologically, residues 46–71 are extracellular; sequence TKLLGRLYYTDITKPNPGTLPPNVSS. Residues 72–92 form a helical membrane-spanning segment; that stretch reads AVTGVALCGTLAGQLFFGWLG. At 93 to 99 the chain is on the cytoplasmic side; it reads DKLGRKS. A helical transmembrane segment spans residues 100–120; that stretch reads VYGFTLILMVVCSIASGLSFG. Topologically, residues 121–125 are extracellular; sequence HTPKS. A helical membrane pass occupies residues 126–146; that stretch reads VIATLCFFRFWLGFGIGGDYP. The Cytoplasmic portion of the chain corresponds to 147–163; sequence LSATIMSEYASKKTRGA. The helical transmembrane segment at 164–184 threads the bilayer; the sequence is FIAAVFAMQGFGILFGAIVAL. The Extracellular portion of the chain corresponds to 185-212; it reads VVSAGFRHAYPAPSYAQNPAASLAPQAD. Residues 213 to 232 traverse the membrane as a helical segment; the sequence is YTWRLILMFGTIPAGLTYYW. Residues 233-296 are Cytoplasmic-facing; the sequence is RMKMPETARY…RQFMKRHGMH (64 aa). Residues 297-317 traverse the membrane as a helical segment; that stretch reads LLATTSTWFLLDIAFYSQNLF. The Extracellular segment spans residues 318–348; sequence QKDIFSKVGWIPPAKTMNALEELYRISRAQA. The helical transmembrane segment at 349–369 threads the bilayer; it reads LIALCGTIPGYWFTVAFIDIV. Residues 370–371 are Cytoplasmic-facing; it reads GR. A helical transmembrane segment spans residues 372 to 392; that stretch reads FWIQIMGFFMMTVFMLALGVP. At 393-405 the chain is on the extracellular side; the sequence is YDHWTHPAHHTGF. A helical transmembrane segment spans residues 406-426; it reads VVLYALTFFFANFGPNSTTFI. Residues 427–442 are Cytoplasmic-facing; the sequence is VPAEIFPARLRSTCHG. The chain crosses the membrane as a helical span at residues 443–463; that stretch reads ISAASGKAGAIIGAFGFLYAA. Residues 464 to 481 are Extracellular-facing; sequence QDQHNPDAGYSRGIGIRN. A helical membrane pass occupies residues 482 to 502; the sequence is ALFVLAGTNFLGMLMTLLVPE. The Cytoplasmic segment spans residues 503–528; that stretch reads SKGLSLEEMSKDNVVDETAQEAIAQA.

It belongs to the major facilitator superfamily. Phosphate:H(+) symporter (TC 2.A.1.9) family. Expressed in the root stele and leaf phloem and xylem.

It localises to the membrane. Its function is as follows. Low-affinity transporter for inorganic phosphate (Pi). Involved in internal Pi transport from root to shoot. Responsible for most of the PHR2-mediated accumulation of excess shoot Pi under abundant Pi conditions, but not for PHO2-mediated accumulation of excess shoot Pi. Acts as a H(+):phosphate symporter. The sequence is that of Inorganic phosphate transporter 1-2 (PTH1-2) from Oryza sativa subsp. japonica (Rice).